Here is a 113-residue protein sequence, read N- to C-terminus: Histone H2B (113 aa).

The interval 1–21 (MPATPAKRAKRVQQEKRHHKK) is disordered. Positions 7-21 (KRAKRVQQEKRHHKK) are enriched in basic residues. Lys-109 is covalently cross-linked (Glycyl lysine isopeptide (Lys-Gly) (interchain with G-Cter in ubiquitin)).

Belongs to the histone H2B family. As to quaternary structure, the nucleosome is a histone octamer containing two molecules each of H2A, H2B, H3 and H4 assembled in one H3-H4 heterotetramer and two H2A-H2B heterodimers. The octamer wraps approximately 147 bp of DNA. In terms of processing, monoubiquitination of Lys-109 gives a specific tag for epigenetic transcriptional activation and is also prerequisite for histone H3 'Lys-4' and 'Lys-79' methylation.

It is found in the nucleus. The protein localises to the chromosome. Core component of nucleosome. Nucleosomes wrap and compact DNA into chromatin, limiting DNA accessibility to the cellular machineries which require DNA as a template. Histones thereby play a central role in transcription regulation, DNA repair, DNA replication and chromosomal stability. DNA accessibility is regulated via a complex set of post-translational modifications of histones, also called histone code, and nucleosome remodeling. The chain is Histone H2B (H2B1) from Euplotes crassus.